A 299-amino-acid chain; its full sequence is Phosphoribosylaminoimidazole-succinocarboxamide synthase (299 aa).

This sequence belongs to the SAICAR synthetase family.

It catalyses the reaction 5-amino-1-(5-phospho-D-ribosyl)imidazole-4-carboxylate + L-aspartate + ATP = (2S)-2-[5-amino-1-(5-phospho-beta-D-ribosyl)imidazole-4-carboxamido]succinate + ADP + phosphate + 2 H(+). It participates in purine metabolism; IMP biosynthesis via de novo pathway; 5-amino-1-(5-phospho-D-ribosyl)imidazole-4-carboxamide from 5-amino-1-(5-phospho-D-ribosyl)imidazole-4-carboxylate: step 1/2. The chain is Phosphoribosylaminoimidazole-succinocarboxamide synthase from Leifsonia xyli subsp. xyli (strain CTCB07).